The following is a 323-amino-acid chain: Ribose-phosphate pyrophosphokinase 2 (323 aa).

ATP is bound by residues 43 to 45 (DGE) and 102 to 103 (RQ). Mg(2+)-binding residues include His136 and Asp177. Lys200 is an active-site residue. D-ribose 5-phosphate contacts are provided by residues Arg202, Asp226, and 230-234 (DTAGT).

It belongs to the ribose-phosphate pyrophosphokinase family. Class I subfamily. As to quaternary structure, homohexamer. Requires Mg(2+) as cofactor.

Its subcellular location is the cytoplasm. The catalysed reaction is D-ribose 5-phosphate + ATP = 5-phospho-alpha-D-ribose 1-diphosphate + AMP + H(+). It participates in metabolic intermediate biosynthesis; 5-phospho-alpha-D-ribose 1-diphosphate biosynthesis; 5-phospho-alpha-D-ribose 1-diphosphate from D-ribose 5-phosphate (route I): step 1/1. In terms of biological role, involved in the biosynthesis of the central metabolite phospho-alpha-D-ribosyl-1-pyrophosphate (PRPP) via the transfer of pyrophosphoryl group from ATP to 1-hydroxyl of ribose-5-phosphate (Rib-5-P). This is Ribose-phosphate pyrophosphokinase 2 from Enterococcus faecalis (strain ATCC 700802 / V583).